Consider the following 228-residue polypeptide: Homeobox-leucine zipper protein ATHB-53 (228 aa).

The segment at 36–62 (DGGEESKPVKRRRKRRSKGSSATNEED) is disordered. Basic residues predominate over residues 44 to 53 (VKRRRKRRSK). The segment at residues 68 to 127 (GMLRKRKLTDEQVNMLEYSFGNEHKLESGRKEKIAGELGLDPRQVAVWFQNRRARWKNKK) is a DNA-binding region (homeobox). A leucine-zipper region spans residues 128–156 (LEEEYAKLKNHHDNVVLGQCQLESQILKL).

The protein belongs to the HD-ZIP homeobox family. Class I subfamily. In terms of tissue distribution, expressed in root meristem, late flowers and siliques.

It localises to the nucleus. Functionally, probable transcription factor that may play a regulatory role in auxin/cytokinin signaling during root development. This chain is Homeobox-leucine zipper protein ATHB-53 (ATHB-53), found in Arabidopsis thaliana (Mouse-ear cress).